The sequence spans 536 residues: Alpha-1,3-mannosyl-glycoprotein 4-beta-N-acetylglucosaminyltransferase A (536 aa).

Topologically, residues 1 to 6 (MRLRNG) are cytoplasmic. A helical; Signal-anchor for type II membrane protein transmembrane segment spans residues 7–27 (TVATALVFITTFLSLSWYTAW). Residues 28–54 (QNGKEKLMAYQREFHALKERLRIAEHR) are a coiled coil. Residues 28–536 (QNGKEKLMAY…EIHIKRNPAD (509 aa)) lie on the Lumenal side of the membrane. 2 N-linked (GlcNAc...) asparagine glycosylation sites follow: N77 and N458.

The protein belongs to the glycosyltransferase 54 family. It depends on a divalent metal cation as a cofactor. In terms of processing, N-glycosylated.

It is found in the golgi apparatus membrane. The protein localises to the secreted. The enzyme catalyses N(4)-{beta-D-GlcNAc-(1-&gt;2)-alpha-D-Man-(1-&gt;3)-[beta-D-GlcNAc-(1-&gt;2)-alpha-D-Man-(1-&gt;6)]-beta-D-Man-(1-&gt;4)-beta-D-GlcNAc-(1-&gt;4)-beta-D-GlcNAc}-L-asparaginyl-[protein] + UDP-N-acetyl-alpha-D-glucosamine = N(4)-{beta-D-GlcNAc-(1-&gt;2)-[beta-D-GlcNAc-(1-&gt;4)]-alpha-D-Man-(1-&gt;3)-[beta-D-GlcNAc-(1-&gt;2)-alpha-D-Man-(1-&gt;6)]-beta-D-Man-(1-&gt;4)-beta-D-GlcNAc-(1-&gt;4)-beta-D-GlcNAc}-L-asparaginyl-[protein] + UDP + H(+). It carries out the reaction an N(4)-{beta-D-GlcNAc-(1-&gt;2)-alpha-D-Man-(1-&gt;3)-[alpha-D-Man-(1-&gt;6)]-beta-D-Man-(1-&gt;4)-beta-D-GlcNAc-(1-&gt;4)-beta-D-GlcNAc}-L-asparaginyl-[protein] + UDP-N-acetyl-alpha-D-glucosamine = an N(4)-{beta-D-GlcNAc-(1-&gt;2)-[beta-D-GlcNAc-(1-&gt;4)]-alpha-D-Man-(1-&gt;3)-[alpha-D-Man-(1-&gt;6)]-beta-D-Man-(1-&gt;4)-beta-D-GlcNAc-(1-&gt;4)-beta-D-GlcNAc}-L-asparaginyl-[protein] + UDP + H(+). It catalyses the reaction an N(4)-{beta-D-GlcNAc-(1-&gt;2)-alpha-D-Man-(1-&gt;3)-[beta-D-GlcNAc-(1-&gt;2)-[beta-D-GlcNAc-(1-&gt;6)]-alpha-D-Man-(1-&gt;6)]-beta-D-Man-(1-&gt;4)-beta-D-GlcNAc-(1-&gt;4)-beta-D-GlcNAc}-L-asparaginyl-[protein] + UDP-N-acetyl-alpha-D-glucosamine = an N(4)-{beta-D-GlcNAc-(1-&gt;2)-[beta-D-GlcNAc-(1-&gt;4)]-alpha-D-Man-(1-&gt;3)-[beta-D-GlcNAc-(1-&gt;2)-[beta-D-GlcNAc-(1-&gt;6)]-alpha-D-Man-(1-&gt;6)]-beta-D-Man-(1-&gt;4)-beta-D-GlcNAc-(1-&gt;4)-beta-D-GlcNAc}-L-asparaginyl-[protein] + UDP + H(+). The catalysed reaction is an N(4)-{beta-D-GlcNAc-(1-&gt;2)-alpha-D-Man-(1-&gt;3)-[beta-D-GlcNAc-(1-&gt;2)-alpha-D-Man-(1-&gt;6)]-beta-D-Man-(1-&gt;4)-beta-D-GlcNAc-(1-&gt;4)-[alpha-L-Fuc-(1-&gt;6)]-beta-D-GlcNAc}-L-asparaginyl-[protein] + UDP-N-acetyl-alpha-D-glucosamine = N(4)-{beta-D-GlcNAc-(1-&gt;2)-[beta-D-GlcNAc-(1-&gt;4)]-alpha-D-Man-(1-&gt;3)-[beta-D-GlcNAc-(1-&gt;2)-alpha-D-Man-(1-&gt;6)]-beta-D-Man-(1-&gt;4)-beta-D-GlcNAc-(1-&gt;4)-[alpha-L-Fuc-(1-&gt;6)]-beta-D-GlcNAc}-asparaginyl-[protein] + UDP + H(+). The enzyme catalyses an N(4)-{beta-D-GlcNAc-(1-&gt;2)-alpha-D-Man-(1-&gt;3)-[beta-D-Gal-(1-&gt;4)-beta-D-GlcNAc-(1-&gt;2)-alpha-D-Man-(1-&gt;6)]-beta-D-Man-(1-&gt;4)-beta-D-GlcNAc-(1-&gt;4)-beta-D-GlcNAc}-L-asparaginyl-[protein] + UDP-N-acetyl-alpha-D-glucosamine = an N(4)-{beta-D-GlcNAc-(1-&gt;2)-[beta-D-GlcNAc-(1-&gt;4)]-alpha-D-Man-(1-&gt;3)-[beta-D-Gal-(1-&gt;4)-beta-D-GlcNAc-(1-&gt;2)-alpha-D-Man-(1-&gt;6)]-beta-D-Man-(1-&gt;4)-beta-D-GlcNAc-(1-&gt;4)-beta-D-GlcNAc}-L-asparaginyl-[protein] + UDP + H(+). It carries out the reaction N(4)-{beta-D-GlcNAc-(1-&gt;2)-alpha-D-Man-(1-&gt;3)-[alpha-D-Man-(1-&gt;3)-{alpha-D-Man-(1-&gt;6)}-alpha-D-Man-(1-&gt;6)]-beta-D-Man-(1-&gt;4)-beta-D-GlcNAc-(1-&gt;4)-beta-D-GlcNAc}-asparaginyl-[protein] + UDP-N-acetyl-alpha-D-glucosamine = N(4)-{beta-D-GlcNAc-(1-&gt;2)-[beta-D-GlcNAc-(1-&gt;4)]-alpha-D-Man-(1-&gt;3)-[alpha-D-Man-(1-&gt;3)-{alpha-D-Man-(1-&gt;6)}-alpha-D-Man-(1-&gt;6)]-beta-D-Man-(1-&gt;4)-beta-D-GlcNAc-(1-&gt;4)-beta-D-GlcNAc}-asparaginyl-[protein] + UDP + H(+). It catalyses the reaction N(4)-{beta-D-GlcNAc-(1-&gt;2)-alpha-D-Man-(1-&gt;3)-beta-D-Man-(1-&gt;4)-beta-D-GlcNAc-(1-&gt;4)-beta-D-GlcNAc}-asparaginyl-[protein] + UDP-N-acetyl-alpha-D-glucosamine = N(4)-{beta-D-GlcNAc-(1-&gt;2)-[beta-D-GlcNAc-(1-&gt;4)]-alpha-D-Man-(1-&gt;3)-beta-D-Man-(1-&gt;4)-beta-D-GlcNAc-(1-&gt;4)-beta-D-GlcNAc}-asparaginyl-[protein] + UDP + H(+). The protein operates within protein modification; protein glycosylation. Its activity is regulated as follows. Inhibited by UDP. In terms of biological role, glycosyltransferase that catalyze the transfer of GlcNAc from UDP-GlcNAc to the GlcNAcbeta1-2Manalpha1-3 arm of the core structure of N-linked glycans through a beta1-4 linkage and participates in the production of tri- and tetra-antennary N-linked sugar chains. Involved in glucose transport by mediating SLC2A2/GLUT2 glycosylation, thereby controlling cell-surface expression of SLC2A2 in pancreatic beta cells. This chain is Alpha-1,3-mannosyl-glycoprotein 4-beta-N-acetylglucosaminyltransferase A, found in Xenopus tropicalis (Western clawed frog).